The sequence spans 104 residues: Sweet protein mabinlin-1 (104 aa).

4 disulfide bridges follow: cysteine 4-cysteine 53, cysteine 17-cysteine 42, cysteine 43-cysteine 91, and cysteine 55-cysteine 99.

This sequence belongs to the 2S seed storage albumins family. Heterodimer of a small A and a large B chain linked by disulfide bonds.

Its function is as follows. 2S seed storage protein having sweetness-inducing activity. This form is not heat stable. The sequence is that of Sweet protein mabinlin-1 from Capparis masaikai (Mabinlang).